The primary structure comprises 209 residues: Imidazoleglycerol-phosphate dehydratase (209 aa).

This sequence belongs to the imidazoleglycerol-phosphate dehydratase family.

It is found in the cytoplasm. It catalyses the reaction D-erythro-1-(imidazol-4-yl)glycerol 3-phosphate = 3-(imidazol-4-yl)-2-oxopropyl phosphate + H2O. The protein operates within amino-acid biosynthesis; L-histidine biosynthesis; L-histidine from 5-phospho-alpha-D-ribose 1-diphosphate: step 6/9. This chain is Imidazoleglycerol-phosphate dehydratase, found in Microcystis aeruginosa (strain NIES-843 / IAM M-2473).